We begin with the raw amino-acid sequence, 163 residues long: 3-isopropylmalate dehydratase small subunit (163 aa).

Belongs to the LeuD family. LeuD type 2 subfamily. In terms of assembly, heterodimer of LeuC and LeuD.

The catalysed reaction is (2R,3S)-3-isopropylmalate = (2S)-2-isopropylmalate. It functions in the pathway amino-acid biosynthesis; L-leucine biosynthesis; L-leucine from 3-methyl-2-oxobutanoate: step 2/4. In terms of biological role, catalyzes the isomerization between 2-isopropylmalate and 3-isopropylmalate, via the formation of 2-isopropylmaleate. This Ruminiclostridium cellulolyticum (strain ATCC 35319 / DSM 5812 / JCM 6584 / H10) (Clostridium cellulolyticum) protein is 3-isopropylmalate dehydratase small subunit.